Reading from the N-terminus, the 96-residue chain is Large ribosomal subunit protein uL23 (96 aa).

It belongs to the universal ribosomal protein uL23 family. As to quaternary structure, part of the 50S ribosomal subunit. Contacts protein L29, and trigger factor when it is bound to the ribosome.

One of the early assembly proteins it binds 23S rRNA. One of the proteins that surrounds the polypeptide exit tunnel on the outside of the ribosome. Forms the main docking site for trigger factor binding to the ribosome. In Ruthia magnifica subsp. Calyptogena magnifica, this protein is Large ribosomal subunit protein uL23.